A 152-amino-acid polypeptide reads, in one-letter code: Ribosome maturation factor RimP (152 aa).

Belongs to the RimP family.

Its subcellular location is the cytoplasm. Required for maturation of 30S ribosomal subunits. In Alteromonas mediterranea (strain DSM 17117 / CIP 110805 / LMG 28347 / Deep ecotype), this protein is Ribosome maturation factor RimP.